A 343-amino-acid chain; its full sequence is MEAVATATAAKEPDKGCIEPGPGHWGELSRTPVPSKPQDKVEAAEATPVALDSDTSGAENAAVSAMLHAVAASRLPVCSQQQGEPDLTEHEKVAILAQLYHEKPLVFLERFRTGLREEHLACFGHVRGDHRADFYCAEVARQGTARPRTLRTRLRNRRYAALRELIQGGEYFSDEQMRFRAPLLYEQYIGQYLTQEELSARTPTHQPPKPGSPGRPACPLSNLLLQSYEERELQQRLLQQQEEEEACLEEEEEEEDSDEEDQRSGKDSEAWVPDSEERLILREEFTSRMHQRFLDGKDGDFDYSTVDDNPDFDNLDIVARDEEERYFDEEEPEDAPSPELDGD.

M1 is modified (N-acetylmethionine). Residues 1–37 (MEAVATATAAKEPDKGCIEPGPGHWGELSRTPVPSKP) form a disordered region. T47 carries the post-translational modification Phosphothreonine. 3 disordered regions span residues 200–220 (ARTPTHQPPKPGSPGRPACPL), 234–277 (QQRL…DSEE), and 292–343 (RFLD…LDGD). A coiled-coil region spans residues 224–262 (LLQSYEERELQQRLLQQQEEEEACLEEEEEEEDSDEEDQ). A compositionally biased stretch (acidic residues) spans 241 to 261 (QEEEEACLEEEEEEEDSDEED). The span at 262 to 277 (QRSGKDSEAWVPDSEE) shows a compositional bias: basic and acidic residues. S275 and S337 each carry phosphoserine. The segment covering 324-343 (ERYFDEEEPEDAPSPELDGD) has biased composition (acidic residues).

As to quaternary structure, associates with splicing factor SF3B complex, involved in branch-site recognition.

The protein resides in the nucleus. May play a role pre-mRNA splicing through the association with the splicing factor SF3B complex which is involved in branch-site recognition. In Homo sapiens (Human), this protein is Coiled-coil domain-containing protein 97 (CCDC97).